The primary structure comprises 263 residues: tRNA1(Val) (adenine(37)-N6)-methyltransferase (263 aa).

The protein belongs to the methyltransferase superfamily. tRNA (adenine-N(6)-)-methyltransferase family.

Its subcellular location is the cytoplasm. The catalysed reaction is adenosine(37) in tRNA1(Val) + S-adenosyl-L-methionine = N(6)-methyladenosine(37) in tRNA1(Val) + S-adenosyl-L-homocysteine + H(+). Functionally, specifically methylates the adenine in position 37 of tRNA(1)(Val) (anticodon cmo5UAC). This chain is tRNA1(Val) (adenine(37)-N6)-methyltransferase, found in Salmonella choleraesuis (strain SC-B67).